A 210-amino-acid polypeptide reads, in one-letter code: Probable GTP-binding protein EngB (210 aa).

The EngB-type G domain maps to 25 to 199; the sequence is TGIEVAFAGR…RQKLDTWFSE (175 aa). Residues 33 to 40, 60 to 64, 78 to 81, 145 to 148, and 178 to 180 contribute to the GTP site; these read GRSNAGKS, GRTQL, DLPG, TKAD, and FSS. The Mg(2+) site is built by serine 40 and threonine 62.

The protein belongs to the TRAFAC class TrmE-Era-EngA-EngB-Septin-like GTPase superfamily. EngB GTPase family. Requires Mg(2+) as cofactor.

Its function is as follows. Necessary for normal cell division and for the maintenance of normal septation. The sequence is that of Probable GTP-binding protein EngB from Shigella flexneri.